Reading from the N-terminus, the 464-residue chain is uncharacterized protein (464 aa).

The first 24 residues, M1–A24, serve as a signal peptide directing secretion.

Belongs to the intimin/invasin family.

It is found in the periplasm. This is an uncharacterized protein from Escherichia coli (strain K12).